Here is a 282-residue protein sequence, read N- to C-terminus: Parvulin-like PPIase (282 aa).

The N-terminal stretch at 1 to 20 (MKKLSVIFLSVSMLSGIAFA) is a signal peptide. The 94-residue stretch at 138 to 231 (KEQIKVAHIL…FGWHIIKVLE (94 aa)) folds into the PpiC domain.

The protein belongs to the PpiC/parvulin rotamase family.

Its subcellular location is the cell outer membrane. The catalysed reaction is [protein]-peptidylproline (omega=180) = [protein]-peptidylproline (omega=0). The protein is Parvulin-like PPIase (plp) of Rickettsia conorii (strain ATCC VR-613 / Malish 7).